Here is an 823-residue protein sequence, read N- to C-terminus: Sphingomyelin phosphodiesterase 4 (823 aa).

Residues S130 and S245 each carry the phosphoserine modification. Residue T665 is modified to Phosphothreonine. S749 is subject to Phosphoserine. A helical membrane pass occupies residues 776 to 796; it reads LLLLLMAFFVASLFCIGPLSC.

Mg(2+) serves as cofactor. In terms of tissue distribution, expressed in skeletal muscle (at protein level). As to expression, expressed in skeletal muscle but a lower levels than isoform 1 (at protein level).

It localises to the endoplasmic reticulum membrane. It is found in the golgi apparatus membrane. Its subcellular location is the nucleus envelope. The protein resides in the cell membrane. The protein localises to the sarcolemma. It catalyses the reaction a sphingomyelin + H2O = phosphocholine + an N-acylsphing-4-enine + H(+). With respect to regulation, activated by phosphatidylserine and tumor necrosis factor (TNF). Inhibited by scyphostatin. Catalyzes the hydrolysis of membrane sphingomyelin to form phosphorylcholine and ceramide. It has a relevant role in the homeostasis of membrane sphingolipids, thereby influencing membrane integrity, and endoplasmic reticulum organization and function. May sensitize cells to DNA damage-induced apoptosis. In skeletal muscle, mediates TNF-stimulated oxidant production. The sequence is that of Sphingomyelin phosphodiesterase 4 (Smpd4) from Mus musculus (Mouse).